The primary structure comprises 141 residues: Arsenate reductase (141 aa).

C12 serves as the catalytic Nucleophile; cysteine thioarsenate intermediate.

Belongs to the ArsC family. Monomer in solution.

It catalyses the reaction [glutaredoxin]-dithiol + arsenate + glutathione + H(+) = glutathionyl-S-S-[glutaredoxin] + arsenite + H2O. Inhibited by the thiol reagents iodoacetate (IAA) and N-ethylmaleimide (NEM). Activity is rapidly inactivated by the histidine-modifying reagent diethylpyrocarbonate (DEPC). Functionally, involved in resistance to arsenate. Catalyzes the reduction of arsenate [As(V)] to arsenite [As(III)]. The resulting arsenite is then extruded from the cell via the ArsAB transport system. In Escherichia coli, this protein is Arsenate reductase.